Reading from the N-terminus, the 241-residue chain is Uridylate kinase (241 aa).

15–18 (KLSG) contributes to the ATP binding site. The tract at residues 23-28 (GAEGFG) is involved in allosteric activation by GTP. G57 contributes to the UMP binding site. Residues G58 and R62 each coordinate ATP. UMP contacts are provided by residues D77 and 138–145 (TGNPFFTT). The ATP site is built by T165, Y171, and D174.

The protein belongs to the UMP kinase family. Homohexamer.

The protein resides in the cytoplasm. The catalysed reaction is UMP + ATP = UDP + ADP. It participates in pyrimidine metabolism; CTP biosynthesis via de novo pathway; UDP from UMP (UMPK route): step 1/1. Its activity is regulated as follows. Allosterically activated by GTP. Inhibited by UTP. Catalyzes the reversible phosphorylation of UMP to UDP. The sequence is that of Uridylate kinase from Serratia proteamaculans (strain 568).